We begin with the raw amino-acid sequence, 338 residues long: Cytochrome f (338 aa).

Positions 1–45 (MNFKVCSFPSRRQSIAAFVRVLMVILLTLGALVSSDVLLPQPAAA) are cleaved as a signal peptide. Tyr46, Cys66, Cys69, and His70 together coordinate heme. The helical transmembrane segment at 300–316 (IAFLAAITLTQILLVLK) threads the bilayer.

Belongs to the cytochrome f family. In terms of assembly, the 4 large subunits of the cytochrome b6-f complex are cytochrome b6, subunit IV (17 kDa polypeptide, PetD), cytochrome f and the Rieske protein, while the 4 small subunits are PetG, PetL, PetM and PetN. The complex functions as a dimer. Heme is required as a cofactor.

It localises to the cellular thylakoid membrane. In terms of biological role, component of the cytochrome b6-f complex, which mediates electron transfer between photosystem II (PSII) and photosystem I (PSI), cyclic electron flow around PSI, and state transitions. In Leptolyngbya laminosa (Phormidium laminosum), this protein is Cytochrome f (petA).